The primary structure comprises 136 residues: uncharacterized protein (136 aa).

It belongs to the mimivirus L163/R849 family.

This is an uncharacterized protein from Acanthamoeba polyphaga mimivirus (APMV).